The following is a 581-amino-acid chain: Peptidyl-prolyl cis-trans isomerase FKBP10 (581 aa).

An N-terminal signal peptide occupies residues 1–33 (MFLVGSSSHTLHRLRILPLLLLLQTLERGLGRA). 3 consecutive PPIase FKBP-type domains span residues 61–149 (GDFV…LDVW), 173–261 (SDFV…LDVH), and 285–373 (GDFM…IDFH). N-linked (GlcNAc...) asparagine glycans are attached at residues asparagine 69, asparagine 181, asparagine 293, asparagine 309, asparagine 351, asparagine 392, and asparagine 406. Residues 398–485 (GDFIRYHYNC…LFEVELVSRE (88 aa)) form the PPIase FKBP-type 4 domain. EF-hand domains lie at 496–531 (WYQDPSTSLFEDMDLNKDGEVPPEEFSSFIKAQVNE) and 541–576 (DPDKTISDMFQNQDRNQDGKITAEELKLKSDEDQER). Ca(2+)-binding residues include aspartate 509, asparagine 511, aspartate 513, glutamate 515, glutamate 520, aspartate 554, asparagine 556, aspartate 558, lysine 560, and glutamate 565. A disordered region spans residues 533–581 (KGRLMPGQDPDKTISDMFQNQDRNQDGKITAEELKLKSDEDQERVHEEL). Positions 555–581 (RNQDGKITAEELKLKSDEDQERVHEEL) are enriched in basic and acidic residues. A Prevents secretion from ER motif is present at residues 578-581 (HEEL).

N-glycosylated. In terms of processing, phosphorylated. As to expression, expressed in aorta, brain, heart, kidney, lung, spleen and testis. Not detected in liver.

Its subcellular location is the endoplasmic reticulum lumen. The enzyme catalyses [protein]-peptidylproline (omega=180) = [protein]-peptidylproline (omega=0). With respect to regulation, inhibited by both FK506 and rapamycin, but not by cyclosporin A. Functionally, PPIases accelerate the folding of proteins during protein synthesis. The protein is Peptidyl-prolyl cis-trans isomerase FKBP10 (Fkbp10) of Mus musculus (Mouse).